The following is a 539-amino-acid chain: GMP synthase [glutamine-hydrolyzing] (539 aa).

The region spanning 4-202 (KILILDFGSQ…VLGIAGCKPD (199 aa)) is the Glutamine amidotransferase type-1 domain. The active-site Nucleophile is cysteine 81. Active-site residues include histidine 176 and glutamate 178. Residues 203–395 (WVMRDHIEEA…LGLPPEMVYR (193 aa)) form the GMPS ATP-PPase domain. Residue 230–236 (SGGVDSS) participates in ATP binding.

As to quaternary structure, homodimer.

The enzyme catalyses XMP + L-glutamine + ATP + H2O = GMP + L-glutamate + AMP + diphosphate + 2 H(+). Its pathway is purine metabolism; GMP biosynthesis; GMP from XMP (L-Gln route): step 1/1. Functionally, catalyzes the synthesis of GMP from XMP. The chain is GMP synthase [glutamine-hydrolyzing] from Cupriavidus necator (strain ATCC 17699 / DSM 428 / KCTC 22496 / NCIMB 10442 / H16 / Stanier 337) (Ralstonia eutropha).